The sequence spans 123 residues: Proteasome assembly chaperone 4 (123 aa).

Belongs to the PSMG4 family. In terms of assembly, interacts with PSMG3. Associates with alpha subunits of the 20S proteasome.

Functionally, chaperone protein which promotes assembly of the 20S proteasome. The polypeptide is Proteasome assembly chaperone 4 (Homo sapiens (Human)).